A 1848-amino-acid polypeptide reads, in one-letter code: MATPQVKDLVLRSPAGSSDVISFAWPLQIGHGQDKHDNGIDIIDTIKFVCDELPSMSSAFEETNLHQIDTACYKTMTGLVDRFNKAVDSIVALEKGTSLPAERLNKFAHPSLLRHILQLVYNAAVLDPDKLNQYEPFSPEVYGETSYELVQQMLKHVTVSKEDTFIDLGSGVGQVVLQMAGSFPLKTCIGIEKADTPARYAERMDVIFRQYMGWFGKRFCEYKLIKGDFLVDEHRENITSSTLVFVNNFAFGPTVDHQLKERFADLRDGARVVSSKSFCPLNFRITDRNLSDIGTIMHVSEIPPLKGSVSWTCKPVSYYLHVIDRTILERYFQRLKTKGGNDHESVGTVRTTRDRAKREANVGQHHHNNHHSNNHANSNNHQRDREQSNGATATAAHQQRHQSQSPANVSGAGIVLAASGQQAASKTRQQLQHQHNQQQRSLDMESSTESDGDATNGNGGNTTTATNTTSASNGPMTRKVWSDWCSSKGKSSQSDDEENNNSNSNGGSNGGSIGGGSVGRQARATTQKKRKKLTRKAAIASKSAAAAQREAEAAAAAAVSVPSKESSSKEDPPRAASAGPGRKGRMKKGARGRKSLKIVGLEALHKQTVLSTSLDTMTKKLPAAPGTVDQQLTALLTENMSHAELDIPTAPQDTPYALQILLDVFRSQYTSMIEHMKSSAYVPQVQKQIAQEQERMARLKNRASQLDKQIKVLIDDSVALLKVRMNELGIHVNSPNDLIAQAKEIVGRHKDLQHTASRMRNEVTFYEGEQKLLLNKQLKNLPEYQKLCGTVNGKVKLEVPPELSETTAQELVLKEIANTLSQRKKLYAQVSTIEQETSVLQKTAEERSTAATLLAQGTNMIVSTGSSSSSSTTVCASAVTAQSNKLNSVKNSRRNREHRARSQEWPEVPEVGKIQESNPEVLAQKIVETCRQIEAGKFQGAGAPSSQVNGKNKAIIEVPPPPATAPVSIKSSPGHHYKDTTLMPAPKQQQQQQMTLSQLPKCELPGLSTSRKQESPKVANFEDRLKSIITTALNEDQEQRSKAVESSPSPSPLHSPAPKRSKQHPAGAINPAQSLPNNLHNIITVSTQGLMHLNANTTISPITPPLPGPGAGATASTAPPPPANLPYGAYGGAVAKTTISGKYQAAKEPKYSPVRQAPLPPPPSHMASLYPAGQQTTPADLGYQRRRSSVSATSYEHYMVQQQQQLQQQQLMLAAAAHAAQRQQMRVEEQQQQQQHQHHHHHHHHHPQHRLPQHVQHQHPHQHHPNEFKAPPADSHLQRSSSREQLIVEPPQTQPLELLPRASSANSDYSGYRIRPPSRPSSNSSQPDYTQVSPAKMALRRHLSQEKLSQHVTPQATPPLPGHGGAPTSGKTIGDLVNGEIERTLEISHQSIINAAVNMSTSGASFMERAFLNERSNDRLLINLNAQRPERVHVRPLSEESQDPQPTSYAQERGPGLGAGGAAAGGNSNLATLAHVAYAQKAQGGARANAGTAPPATHSSSARSGRDYQPVALPRAELKGSIEAYFHEEQQQKQSKGAGSAGSSSLRGPRLNGANPPLEGLAASLQDHVRARKYKEETEERQRRAAAAASSSAGPPAGMELPTHYAHQAPPAHSYHHHGASINGTPHKVELGIKRSSPLAPHQQPPRPSKLAHYEPPTTQQQHAHAHLYANGQVLPPPPAHDATTPSPTPSSSSSSCGRRSNSNNGKLLVDPPLLMSPEINSLLGDERPLQLSHHQQQQQQMLHHHQSQQQQHLQLTQQQLRVAHLGHGLSHGHSTMPTLGGQRNGNGNAADDVNDLATQRTITNYDPRRRLRTTLSGPTKLSAAHSNQNLNGYVMADSSSSCPTIPQ.

The 318-residue stretch at aspartate 19–lysine 336 folds into the DOT1 domain. S-adenosyl-L-methionine contacts are provided by residues tyrosine 142–threonine 145, phenylalanine 165–glutamine 174, glutamate 192, and aspartate 228–phenylalanine 229. 14 disordered regions span residues lysine 338 to alanine 537, alanine 558 to arginine 593, leucine 886 to valine 908, proline 960 to leucine 996, leucine 1033 to leucine 1075, histidine 1165 to valine 1190, glutamine 1221 to serine 1333, glutamine 1345 to glycine 1374, valine 1432 to alanine 1463, alanine 1486 to tyrosine 1508, glutamate 1529 to glutamate 1559, lysine 1573 to histidine 1604, serine 1637 to proline 1713, and glutamine 1731 to threonine 1757. The span at glycine 339–alanine 360 shows a compositional bias: basic and acidic residues. Residues glutamine 364–asparagine 373 show a composition bias toward basic residues. Positions alanine 391 to serine 405 are enriched in low complexity. Polar residues predominate over residues serine 419–arginine 428. Low complexity-rich tracts occupy residues glutamine 429–glutamine 439 and aspartate 453–glycine 474. A phosphoserine mark is found at serine 491, serine 492, and serine 494. Positions glycine 507 to valine 518 are enriched in gly residues. Composition is skewed to basic residues over residues threonine 526–arginine 535 and arginine 582–arginine 593. The span at glutamine 1221–glutamine 1235 shows a compositional bias: low complexity. Basic residues predominate over residues histidine 1236–histidine 1263. The span at glutamate 1289–proline 1300 shows a compositional bias: low complexity. Phosphoserine is present on residues serine 1318, serine 1324, and serine 1325. The span at glutamine 1532 to serine 1545 shows a compositional bias: low complexity. Over residues tyrosine 1574–arginine 1583 the composition is skewed to basic and acidic residues. Composition is skewed to low complexity over residues alanine 1585–glycine 1598 and histidine 1681–serine 1696. The segment covering cysteine 1697–glycine 1706 has biased composition (polar residues).

The protein belongs to the class I-like SAM-binding methyltransferase superfamily. DOT1 family. As to expression, broadly expressed in most tissues. Expressed in a large subset of neurons and in a small subset of glial cells.

The protein resides in the nucleus. The catalysed reaction is L-lysyl(79)-[histone H3] + 3 S-adenosyl-L-methionine = N(6),N(6),N(6)-trimethyl-L-lysyl(79)-[histone H3] + 3 S-adenosyl-L-homocysteine + 3 H(+). Its function is as follows. Histone methyltransferase. Methylates 'Lys-79' of histone H3. Required for Polycomb Group (PcG) and trithorax Group (trxG) maintenance of expression. Also involved in telomeric silencing but do not in centric heterochromatin. Probably participates in pairing sensitivity. This chain is Histone-lysine N-methyltransferase, H3 lysine-79 specific (gpp), found in Drosophila melanogaster (Fruit fly).